The chain runs to 161 residues: 2-C-methyl-D-erythritol 2,4-cyclodiphosphate synthase (161 aa).

Asp9 and His11 together coordinate a divalent metal cation. Residues 9 to 11 and 37 to 38 each bind 4-CDP-2-C-methyl-D-erythritol 2-phosphate; these read DFH and HS. Residue His45 participates in a divalent metal cation binding. 4-CDP-2-C-methyl-D-erythritol 2-phosphate is bound by residues 59–61, 64–68, 135–138, and Arg145; these read DIG, FPDTD, and TTTE.

Belongs to the IspF family. In terms of assembly, homotrimer. The cofactor is a divalent metal cation.

It catalyses the reaction 4-CDP-2-C-methyl-D-erythritol 2-phosphate = 2-C-methyl-D-erythritol 2,4-cyclic diphosphate + CMP. It participates in isoprenoid biosynthesis; isopentenyl diphosphate biosynthesis via DXP pathway; isopentenyl diphosphate from 1-deoxy-D-xylulose 5-phosphate: step 4/6. Functionally, involved in the biosynthesis of isopentenyl diphosphate (IPP) and dimethylallyl diphosphate (DMAPP), two major building blocks of isoprenoid compounds. Catalyzes the conversion of 4-diphosphocytidyl-2-C-methyl-D-erythritol 2-phosphate (CDP-ME2P) to 2-C-methyl-D-erythritol 2,4-cyclodiphosphate (ME-CPP) with a corresponding release of cytidine 5-monophosphate (CMP). This chain is 2-C-methyl-D-erythritol 2,4-cyclodiphosphate synthase, found in Leptospira borgpetersenii serovar Hardjo-bovis (strain JB197).